Here is a 415-residue protein sequence, read N- to C-terminus: uncharacterized protein (415 aa).

Positions 179–199 (SPAPCSPAPGSPPPPAPPAAP) are enriched in pro residues. The tract at residues 179-200 (SPAPCSPAPGSPPPPAPPAAPA) is disordered.

The protein belongs to the herpesviridae BTRF1 family.

This is an uncharacterized protein from Equus caballus (Horse).